Consider the following 529-residue polypeptide: Bifunctional purine biosynthesis protein PurH (529 aa).

The 148-residue stretch at 1-148 (MNNARPIRRA…KNHKDTTIIV (148 aa)) folds into the MGS-like domain.

This sequence belongs to the PurH family.

The catalysed reaction is (6R)-10-formyltetrahydrofolate + 5-amino-1-(5-phospho-beta-D-ribosyl)imidazole-4-carboxamide = 5-formamido-1-(5-phospho-D-ribosyl)imidazole-4-carboxamide + (6S)-5,6,7,8-tetrahydrofolate. It carries out the reaction IMP + H2O = 5-formamido-1-(5-phospho-D-ribosyl)imidazole-4-carboxamide. The protein operates within purine metabolism; IMP biosynthesis via de novo pathway; 5-formamido-1-(5-phospho-D-ribosyl)imidazole-4-carboxamide from 5-amino-1-(5-phospho-D-ribosyl)imidazole-4-carboxamide (10-formyl THF route): step 1/1. It participates in purine metabolism; IMP biosynthesis via de novo pathway; IMP from 5-formamido-1-(5-phospho-D-ribosyl)imidazole-4-carboxamide: step 1/1. The protein is Bifunctional purine biosynthesis protein PurH of Shewanella pealeana (strain ATCC 700345 / ANG-SQ1).